A 634-amino-acid chain; its full sequence is Chaperone protein HtpG (634 aa).

An a; substrate-binding region spans residues 1–342 (MSVETQKETL…SNDLSLNVSR (342 aa)). Positions 343-559 (EILQKDPVID…EQDLGLQMRQ (217 aa)) are b. Residues 560–634 (ILEASGQKVP…LNKLLVELSA (75 aa)) are c.

Belongs to the heat shock protein 90 family. In terms of assembly, homodimer.

It localises to the cytoplasm. In terms of biological role, molecular chaperone. Has ATPase activity. In Pseudomonas paraeruginosa (strain DSM 24068 / PA7) (Pseudomonas aeruginosa (strain PA7)), this protein is Chaperone protein HtpG.